A 455-amino-acid chain; its full sequence is Bifunctional protein GlmU (455 aa).

Residues 1–226 are pyrophosphorylase; that stretch reads MGLSVVILAA…EFEILGVNDR (226 aa). Residues 8-11, Lys-22, Gln-73, 78-79, 99-101, Gly-136, Glu-151, Asn-166, and Asn-224 contribute to the UDP-N-acetyl-alpha-D-glucosamine site; these read LAAG, GT, and YGD. Asp-101 is a binding site for Mg(2+). Asn-224 lines the Mg(2+) pocket. The linker stretch occupies residues 227 to 247; that stretch reads TQLASLERVWQRNVAEKIMAK. Positions 248–455 are N-acetyltransferase; it reads GVSIADPNRF…WQRSVKKTDK (208 aa). The UDP-N-acetyl-alpha-D-glucosamine site is built by Arg-330 and Lys-348. Residue His-360 is the Proton acceptor of the active site. Residues Tyr-363 and Asn-374 each contribute to the UDP-N-acetyl-alpha-D-glucosamine site. Acetyl-CoA contacts are provided by residues Ala-377, 383-384, Ser-402, Ala-420, and Arg-437; that span reads NY.

The protein in the N-terminal section; belongs to the N-acetylglucosamine-1-phosphate uridyltransferase family. In the C-terminal section; belongs to the transferase hexapeptide repeat family. As to quaternary structure, homotrimer. Mg(2+) is required as a cofactor.

It is found in the cytoplasm. It catalyses the reaction alpha-D-glucosamine 1-phosphate + acetyl-CoA = N-acetyl-alpha-D-glucosamine 1-phosphate + CoA + H(+). It carries out the reaction N-acetyl-alpha-D-glucosamine 1-phosphate + UTP + H(+) = UDP-N-acetyl-alpha-D-glucosamine + diphosphate. Its pathway is nucleotide-sugar biosynthesis; UDP-N-acetyl-alpha-D-glucosamine biosynthesis; N-acetyl-alpha-D-glucosamine 1-phosphate from alpha-D-glucosamine 6-phosphate (route II): step 2/2. The protein operates within nucleotide-sugar biosynthesis; UDP-N-acetyl-alpha-D-glucosamine biosynthesis; UDP-N-acetyl-alpha-D-glucosamine from N-acetyl-alpha-D-glucosamine 1-phosphate: step 1/1. It functions in the pathway bacterial outer membrane biogenesis; LPS lipid A biosynthesis. Its function is as follows. Catalyzes the last two sequential reactions in the de novo biosynthetic pathway for UDP-N-acetylglucosamine (UDP-GlcNAc). The C-terminal domain catalyzes the transfer of acetyl group from acetyl coenzyme A to glucosamine-1-phosphate (GlcN-1-P) to produce N-acetylglucosamine-1-phosphate (GlcNAc-1-P), which is converted into UDP-GlcNAc by the transfer of uridine 5-monophosphate (from uridine 5-triphosphate), a reaction catalyzed by the N-terminal domain. The protein is Bifunctional protein GlmU of Francisella tularensis subsp. holarctica (strain OSU18).